We begin with the raw amino-acid sequence, 295 residues long: Glucose-1-phosphate thymidylyltransferase (295 aa).

Mg(2+) is bound by residues D111 and D226.

Belongs to the glucose-1-phosphate thymidylyltransferase family. In terms of assembly, homotetramer. It depends on Mg(2+) as a cofactor.

It carries out the reaction dTTP + alpha-D-glucose 1-phosphate + H(+) = dTDP-alpha-D-glucose + diphosphate. It functions in the pathway carbohydrate biosynthesis; dTDP-L-rhamnose biosynthesis. Its pathway is bacterial outer membrane biogenesis; LPS O-antigen biosynthesis. Its function is as follows. Catalyzes the formation of dTDP-glucose, from dTTP and glucose 1-phosphate, as well as its pyrophosphorolysis. This chain is Glucose-1-phosphate thymidylyltransferase (rmlA), found in Xanthomonas campestris pv. campestris (strain B100).